The following is a 668-amino-acid chain: UvrABC system protein B (668 aa).

Residues 31–188 (HGIEAGEKAQ…RKLVNIQFER (158 aa)) enclose the Helicase ATP-binding domain. 44–51 (GATGTGKT) contributes to the ATP binding site. The Beta-hairpin motif lies at 97 to 120 (YYDYYQPEAYVPSSDTYIEKDSSI). Residues 435-601 (QMDDLVGEIN…TIIKPIRDLI (167 aa)) enclose the Helicase C-terminal domain. The 36-residue stretch at 630–665 (EKLIARLEDEMRAAAKKLDFEQAASLRDTIMDMKTE) folds into the UVR domain.

It belongs to the UvrB family. As to quaternary structure, forms a heterotetramer with UvrA during the search for lesions. Interacts with UvrC in an incision complex.

It localises to the cytoplasm. In terms of biological role, the UvrABC repair system catalyzes the recognition and processing of DNA lesions. A damage recognition complex composed of 2 UvrA and 2 UvrB subunits scans DNA for abnormalities. Upon binding of the UvrA(2)B(2) complex to a putative damaged site, the DNA wraps around one UvrB monomer. DNA wrap is dependent on ATP binding by UvrB and probably causes local melting of the DNA helix, facilitating insertion of UvrB beta-hairpin between the DNA strands. Then UvrB probes one DNA strand for the presence of a lesion. If a lesion is found the UvrA subunits dissociate and the UvrB-DNA preincision complex is formed. This complex is subsequently bound by UvrC and the second UvrB is released. If no lesion is found, the DNA wraps around the other UvrB subunit that will check the other stand for damage. The polypeptide is UvrABC system protein B (Levilactobacillus brevis (strain ATCC 367 / BCRC 12310 / CIP 105137 / JCM 1170 / LMG 11437 / NCIMB 947 / NCTC 947) (Lactobacillus brevis)).